A 478-amino-acid polypeptide reads, in one-letter code: Shikimate biosynthesis protein AroDE (478 aa).

Residues 1-208 form a 3-dehydroquinate dehydratase region; it reads MLCTTISGPS…LKHHYFYNFA (208 aa). Residues S21, 29-31, and 55-57 contribute to the 3-dehydroquinate site; these read EMR and AWK. Residue H110 is the Proton donor/acceptor; for 3-dehydroquinate dehydratase activity of the active site. Residue K133 is the Schiff-base intermediate with substrate; for 3-dehydroquinate dehydratase activity of the active site. R171 and Q196 together coordinate 3-dehydroquinate. Residues 209 to 478 are shikimate 5-dehydrogenase; it reads SLSAQSPICA…VLASLFSIAP (270 aa). 226–228 is a shikimate binding site; it reads SIG. K277 (proton acceptor; for shikimate dehydrogenase activity) is an active-site residue. The shikimate site is built by N298 and D313. NADP(+)-binding positions include 337–341, 360–362, and G435; these read GAGGA and NRT. Shikimate is bound at residue Q442.

It in the N-terminal section; belongs to the type-I 3-dehydroquinase family. The protein in the C-terminal section; belongs to the shikimate dehydrogenase family.

The catalysed reaction is 3-dehydroquinate = 3-dehydroshikimate + H2O. The enzyme catalyses shikimate + NADP(+) = 3-dehydroshikimate + NADPH + H(+). It participates in metabolic intermediate biosynthesis; chorismate biosynthesis; chorismate from D-erythrose 4-phosphate and phosphoenolpyruvate: step 3/7. Its pathway is metabolic intermediate biosynthesis; chorismate biosynthesis; chorismate from D-erythrose 4-phosphate and phosphoenolpyruvate: step 4/7. Bifunctional enzyme that catalyzes two sequential steps of the aromatic amino acids biosynthetic pathway. In the first reaction, the AroD domain catalyzes the cis-dehydration of 3-dehydroquinate (DHQ) and introduces the first double bond of the aromatic ring to yield 3-dehydroshikimate; in the second reaction, the AroE domain catalyzes the reversible NADPH linked reduction of 3-dehydroshikimate (DHSA) to yield shikimate (SA). This Chlamydia trachomatis serovar D (strain ATCC VR-885 / DSM 19411 / UW-3/Cx) protein is Shikimate biosynthesis protein AroDE.